The chain runs to 494 residues: Probable cytosol aminopeptidase (494 aa).

The Mn(2+) site is built by K260 and D265. Residue K272 is part of the active site. Positions 283, 342, and 344 each coordinate Mn(2+). R346 is a catalytic residue.

This sequence belongs to the peptidase M17 family. Mn(2+) serves as cofactor.

The protein resides in the cytoplasm. It catalyses the reaction Release of an N-terminal amino acid, Xaa-|-Yaa-, in which Xaa is preferably Leu, but may be other amino acids including Pro although not Arg or Lys, and Yaa may be Pro. Amino acid amides and methyl esters are also readily hydrolyzed, but rates on arylamides are exceedingly low.. The catalysed reaction is Release of an N-terminal amino acid, preferentially leucine, but not glutamic or aspartic acids.. Functionally, presumably involved in the processing and regular turnover of intracellular proteins. Catalyzes the removal of unsubstituted N-terminal amino acids from various peptides. This chain is Probable cytosol aminopeptidase, found in Bacillus cereus (strain B4264).